We begin with the raw amino-acid sequence, 410 residues long: Structural protein ORF142 (410 aa).

2 disordered regions span residues 1–24 (MNQNHTLDNERNDDDEHSNNHVDT) and 156–197 (PTST…VNIS). The segment covering 161–188 (DDNDNENRSDDDDDDDDYRNDREEVEDS) has biased composition (acidic residues).

It localises to the virion. In Trichoplusia ni ascovirus 2c (TnAV-2c), this protein is Structural protein ORF142.